The following is a 153-amino-acid chain: Aspartate carbamoyltransferase regulatory chain (153 aa).

Zn(2+) is bound by residues Cys-110, Cys-115, Cys-138, and Cys-141.

It belongs to the PyrI family. In terms of assembly, contains catalytic and regulatory chains. Requires Zn(2+) as cofactor.

In terms of biological role, involved in allosteric regulation of aspartate carbamoyltransferase. The polypeptide is Aspartate carbamoyltransferase regulatory chain (Bacteroides fragilis (strain ATCC 25285 / DSM 2151 / CCUG 4856 / JCM 11019 / LMG 10263 / NCTC 9343 / Onslow / VPI 2553 / EN-2)).